The chain runs to 405 residues: Cystathionine gamma-lyase (405 aa).

Residues arginine 62, tyrosine 114, and arginine 119 each contribute to the substrate site. Position 212 is an N6-(pyridoxal phosphate)lysine (lysine 212). Glutamate 339 lines the substrate pocket.

This sequence belongs to the trans-sulfuration enzymes family. In terms of assembly, homotetramer. Interacts with CALM in a calcium-dependent manner. Requires pyridoxal 5'-phosphate as cofactor. In terms of tissue distribution, highly expressed in liver. Also in muscle and lower expression in most tissues except heart, pituitary gland, spleen, thymus, and vascular tissue, where it is hardly detected.

The protein localises to the cytoplasm. The enzyme catalyses L,L-cystathionine + H2O = 2-oxobutanoate + L-cysteine + NH4(+). It carries out the reaction L-cysteine + H2O = hydrogen sulfide + pyruvate + NH4(+) + H(+). The catalysed reaction is L-homocysteine + H2O = 2-oxobutanoate + hydrogen sulfide + NH4(+) + H(+). It catalyses the reaction L-homoserine = 2-oxobutanoate + NH4(+). The enzyme catalyses L-selenocystathionine + H2O = L-selenocysteine + 2-oxobutanoate + NH4(+). The protein operates within amino-acid biosynthesis; L-cysteine biosynthesis; L-cysteine from L-homocysteine and L-serine: step 2/2. With respect to regulation, inhibited by propargylglycine, trifluoroalanine and aminoethoxyvinylglycine. Functionally, catalyzes the last step in the trans-sulfuration pathway from L-methionine to L-cysteine in a pyridoxal-5'-phosphate (PLP)-dependent manner, which consists on cleaving the L,L-cystathionine molecule into L-cysteine, ammonia and 2-oxobutanoate. Part of the L-cysteine derived from the trans-sulfuration pathway is utilized for biosynthesis of the ubiquitous antioxidant glutathione. Besides its role in the conversion of L-cystathionine into L-cysteine, it utilizes L-cysteine and L-homocysteine as substrates (at much lower rates than L,L-cystathionine) to produce the endogenous gaseous signaling molecule hydrogen sulfide (H2S). In vitro, it converts two L-cysteine molecules into lanthionine and H2S, also two L-homocysteine molecules to homolanthionine and H2S, which can be particularly relevant under conditions of severe hyperhomocysteinemia (which is a risk factor for cardiovascular disease, diabetes, and Alzheimer's disease). Lanthionine and homolanthionine are structural homologs of L,L-cystathionine that differ by the absence or presence of an extra methylene group, respectively. Acts as a cysteine-protein sulfhydrase by mediating sulfhydration of target proteins: sulfhydration consists of converting -SH groups into -SSH on specific cysteine residues of target proteins such as GAPDH, PTPN1 and NF-kappa-B subunit RELA, thereby regulating their function. By generating the gasotransmitter H2S, it participates in a number of physiological processes such as vasodilation, bone protection, and inflammation. Plays an essential role in myogenesis by contributing to the biogenesis of H2S in skeletal muscle tissue. Can also accept homoserine as substrate. Catalyzes the elimination of selenocystathionine (which can be derived from the diet) to yield selenocysteine, ammonia and 2-oxobutanoate. This is Cystathionine gamma-lyase (CTH) from Homo sapiens (Human).